We begin with the raw amino-acid sequence, 328 residues long: Probable E3 ubiquitin-protein ligase RHC1A (328 aa).

The residue at position 2 (S2) is an N-acetylserine. The segment at 190–231 (CPVCKDEFELGSEAKQMPCNHIYHSDCIVPWLVQHNSCPVCR) adopts an RING-type; atypical zinc-finger fold. The disordered stretch occupies residues 233-324 (ELPSASGPSS…QQSYMGYSGW (92 aa)). Residues 238-250 (SGPSSSQNRTTPT) show a composition bias toward polar residues. Composition is skewed to low complexity over residues 251-266 (RNYR…NSRE) and 275-290 (FSSF…SSSS). Positions 291–300 (TQNRGGTRNS) are enriched in polar residues.

It carries out the reaction S-ubiquitinyl-[E2 ubiquitin-conjugating enzyme]-L-cysteine + [acceptor protein]-L-lysine = [E2 ubiquitin-conjugating enzyme]-L-cysteine + N(6)-ubiquitinyl-[acceptor protein]-L-lysine.. It participates in protein modification; protein ubiquitination. Functionally, probable E3 ubiquitin-protein ligase that may possess E3 ubiquitin ligase activity in vitro. This is Probable E3 ubiquitin-protein ligase RHC1A from Arabidopsis thaliana (Mouse-ear cress).